Here is a 146-residue protein sequence, read N- to C-terminus: Hemoglobin subunit beta (146 aa).

Val-1 is modified (N-acetylvaline). Residues 2 to 146 (HLTPEEKNAV…VANALAHKYH (145 aa)) form the Globin domain. Thr-12 is modified (phosphothreonine). Ser-44 carries the phosphoserine modification. Lys-59 is modified (N6-acetyllysine). Residue His-63 participates in heme b binding. Lys-82 is subject to N6-acetyllysine. His-92 is a binding site for heme b. Cys-93 is subject to S-nitrosocysteine. The residue at position 144 (Lys-144) is an N6-acetyllysine.

The protein belongs to the globin family. Heterotetramer of two alpha chains and two beta chains. As to expression, red blood cells.

Involved in oxygen transport from the lung to the various peripheral tissues. The sequence is that of Hemoglobin subunit beta (HBB) from Papio cynocephalus (Yellow baboon).